Consider the following 426-residue polypeptide: MSKSENLYSAARELIPGGVNSPVRAFTGVGGTPLFIEKADGAWLYDVDGKAYIDYVGSWGPMVLGHNHPAIRNAVIEAAERGLSFGAPTEMEVKMAELVTSLVPTMDMVRMVNSGTEATMSAIRLARGFTGRDKIIKFEGCYHGHADCLLVKAGSGALTLGQPNSPGVPADFAKHTLTCVYNDLASVRAAFEQYPQEIACIIVEPVAGNMNCVLPLPEFLPGLRALCDEFGALLIIDEVMTGFRVALAGAQDYYGVVPDLTCLGKIIGGGMPVGAFGGRRDVMDALAPTGPVYQAGTLSGNPIAMAAGFACLNEVAQPGIHETLNKLTTRLAEGLREAAQEAGIPLVVNHVGGMFGIFFTDAGSVTCYQDVMACDVERFKRFFHLMLDEGVYLAPSAFEAGFMSVAHSMDDINNTIDAARRVFAKL.

Lys-265 carries the N6-(pyridoxal phosphate)lysine modification.

Belongs to the class-III pyridoxal-phosphate-dependent aminotransferase family. HemL subfamily. Homodimer. Pyridoxal 5'-phosphate serves as cofactor.

The protein resides in the cytoplasm. It catalyses the reaction (S)-4-amino-5-oxopentanoate = 5-aminolevulinate. Its pathway is porphyrin-containing compound metabolism; protoporphyrin-IX biosynthesis; 5-aminolevulinate from L-glutamyl-tRNA(Glu): step 2/2. This is Glutamate-1-semialdehyde 2,1-aminomutase from Salmonella arizonae (strain ATCC BAA-731 / CDC346-86 / RSK2980).